A 273-amino-acid polypeptide reads, in one-letter code: Dermonecrotic toxin LspaSicTox-alphaIA2iii (273 aa).

H5 is an active-site residue. The Mg(2+) site is built by E25 and D27. The active-site Nucleophile is H41. Cystine bridges form between C45-C51 and C47-C190. Residue D85 coordinates Mg(2+).

This sequence belongs to the arthropod phospholipase D family. Class II subfamily. Mg(2+) serves as cofactor. As to expression, expressed by the venom gland.

The protein resides in the secreted. The catalysed reaction is an N-(acyl)-sphingosylphosphocholine = an N-(acyl)-sphingosyl-1,3-cyclic phosphate + choline. It carries out the reaction an N-(acyl)-sphingosylphosphoethanolamine = an N-(acyl)-sphingosyl-1,3-cyclic phosphate + ethanolamine. It catalyses the reaction a 1-acyl-sn-glycero-3-phosphocholine = a 1-acyl-sn-glycero-2,3-cyclic phosphate + choline. The enzyme catalyses a 1-acyl-sn-glycero-3-phosphoethanolamine = a 1-acyl-sn-glycero-2,3-cyclic phosphate + ethanolamine. In terms of biological role, dermonecrotic toxins cleave the phosphodiester linkage between the phosphate and headgroup of certain phospholipids (sphingolipid and lysolipid substrates), forming an alcohol (often choline) and a cyclic phosphate. This toxin acts on sphingomyelin (SM). It may also act on ceramide phosphoethanolamine (CPE), lysophosphatidylcholine (LPC) and lysophosphatidylethanolamine (LPE), but not on lysophosphatidylserine (LPS), and lysophosphatidylglycerol (LPG). It acts by transphosphatidylation, releasing exclusively cyclic phosphate products as second products. Induces dermonecrosis, hemolysis, increased vascular permeability, edema, inflammatory response, and platelet aggregation. This Loxosceles spadicea (Recluse spider) protein is Dermonecrotic toxin LspaSicTox-alphaIA2iii.